The sequence spans 139 residues: Hydrogenase maturation factor HypA (139 aa).

Histidine 2 provides a ligand contact to Ni(2+). Cysteine 73, cysteine 76, cysteine 110, and cysteine 113 together coordinate Zn(2+).

Belongs to the HypA/HybF family.

Involved in the maturation of [NiFe] hydrogenases. Required for nickel insertion into the metal center of the hydrogenase. In Thermococcus onnurineus (strain NA1), this protein is Hydrogenase maturation factor HypA.